The chain runs to 441 residues: Arginine biosynthesis bifunctional protein ArgJ, mitochondrial (441 aa).

Residues Thr-177, Lys-204, Thr-215, Glu-301, Asn-436, and Ser-441 each coordinate substrate. The active-site Nucleophile is the Thr-215.

This sequence belongs to the ArgJ family. As to quaternary structure, heterodimer of an alpha and a beta chain. The alpha and beta chains are autoproteolytically processed from a single precursor protein within the mitochondrion.

It localises to the mitochondrion matrix. The enzyme catalyses N(2)-acetyl-L-ornithine + L-glutamate = N-acetyl-L-glutamate + L-ornithine. It carries out the reaction L-glutamate + acetyl-CoA = N-acetyl-L-glutamate + CoA + H(+). It participates in amino-acid biosynthesis; L-arginine biosynthesis; L-ornithine and N-acetyl-L-glutamate from L-glutamate and N(2)-acetyl-L-ornithine (cyclic): step 1/1. Its pathway is amino-acid biosynthesis; L-arginine biosynthesis; N(2)-acetyl-L-ornithine from L-glutamate: step 1/4. Functionally, catalyzes two activities which are involved in the cyclic version of arginine biosynthesis: the synthesis of acetylglutamate from glutamate and acetyl-CoA, and of ornithine by transacetylation between acetylornithine and glutamate. This Kluyveromyces lactis (strain ATCC 8585 / CBS 2359 / DSM 70799 / NBRC 1267 / NRRL Y-1140 / WM37) (Yeast) protein is Arginine biosynthesis bifunctional protein ArgJ, mitochondrial.